The primary structure comprises 372 residues: Cytochrome b (372 aa).

A run of 4 helical transmembrane segments spans residues 25–45, 69–90, 105–125, and 170–190; these read FGSM…FLAI, WIMQ…YIHI, WLSG…GYVL, and FFAL…IHIM. The heme b site is built by His75 and His89. Residues His174 and His188 each coordinate heme b. His193 lines the a ubiquinone pocket. The next 4 helical transmembrane spans lie at 218–238, 280–300, 312–332, and 339–358; these read YKDM…LSFS, LGGT…PFTH, LSQI…WTAS, and FILI…IMAP.

The protein belongs to the cytochrome b family. The cytochrome bc1 complex contains 3 respiratory subunits (MT-CYB, CYC1 and UQCRFS1), 2 core proteins (UQCRC1 and UQCRC2) and probably 6 low-molecular weight proteins. Heme b serves as cofactor.

The protein localises to the mitochondrion inner membrane. Functionally, component of the ubiquinol-cytochrome c reductase complex (complex III or cytochrome b-c1 complex) that is part of the mitochondrial respiratory chain. The b-c1 complex mediates electron transfer from ubiquinol to cytochrome c. Contributes to the generation of a proton gradient across the mitochondrial membrane that is then used for ATP synthesis. This is Cytochrome b (MT-CYB) from Hemachatus haemachatus (Rinkhals).